We begin with the raw amino-acid sequence, 558 residues long: Acid-sensing ion channel 4-B (558 aa).

Over 1–71 the chain is Cytoplasmic; sequence MPIEFVCKIK…TSERLGFRQT (71 aa). Residues 72 to 92 traverse the membrane as a helical segment; the sequence is LWGLALLVSLGLFLYQATWSA. Residues 93–433 are Extracellular-facing; sequence ATYLERPHLA…ETIEQKKAYD (341 aa). 2 cysteine pairs are disulfide-bonded: Cys120–Cys204 and Cys182–Cys189. Asn140, Asn183, Asn188, Asn210, and Asn245 each carry an N-linked (GlcNAc...) asparagine glycan. Disulfide bonds link Cys298-Cys373, Cys317-Cys369, Cys321-Cys367, Cys330-Cys351, and Cys332-Cys344. Asn374 carries N-linked (GlcNAc...) asparagine glycosylation. Residues 434 to 454 traverse the membrane as a helical segment; sequence IAGLLGDIGGQMGLFIGASIL. The short motif at 450–452 is the GAS motif; ion selectivity filter element; it reads GAS. Over 455–558 the chain is Cytoplasmic; sequence TILEILDYIY…QQAVQQDFAC (104 aa).

It belongs to the amiloride-sensitive sodium channel (TC 1.A.6) family. ASIC4 subfamily. In terms of assembly, homotrimer. Heterotrimer; with other ASIC proteins producing functional channels. As to expression, expressed in central nervous system.

Its subcellular location is the cell membrane. It carries out the reaction Na(+)(in) = Na(+)(out). Does not exhibit measurable stand-alone pH-gated sodium channel activity but may form pH-gated heterotrimeric sodium channels. The sequence is that of Acid-sensing ion channel 4-B from Danio rerio (Zebrafish).